We begin with the raw amino-acid sequence, 318 residues long: Methionyl-tRNA formyltransferase (318 aa).

Residue Ser-114 to Pro-117 participates in (6S)-5,6,7,8-tetrahydrofolate binding.

The protein belongs to the Fmt family.

The enzyme catalyses L-methionyl-tRNA(fMet) + (6R)-10-formyltetrahydrofolate = N-formyl-L-methionyl-tRNA(fMet) + (6S)-5,6,7,8-tetrahydrofolate + H(+). Functionally, attaches a formyl group to the free amino group of methionyl-tRNA(fMet). The formyl group appears to play a dual role in the initiator identity of N-formylmethionyl-tRNA by promoting its recognition by IF2 and preventing the misappropriation of this tRNA by the elongation apparatus. In Protochlamydia amoebophila (strain UWE25), this protein is Methionyl-tRNA formyltransferase.